We begin with the raw amino-acid sequence, 158 residues long: Transcription elongation factor GreA (158 aa).

Basic and acidic residues predominate over residues 24–43; the sequence is DVERPKASEAIGEARDKGDL. Residues 24–47 are disordered; sequence DVERPKASEAIGEARDKGDLSENA. Positions 48-68 form a coiled coil; that stretch reads EYDAAKEAQGLLEMKISKMEE.

It belongs to the GreA/GreB family.

Necessary for efficient RNA polymerase transcription elongation past template-encoded arresting sites. The arresting sites in DNA have the property of trapping a certain fraction of elongating RNA polymerases that pass through, resulting in locked ternary complexes. Cleavage of the nascent transcript by cleavage factors such as GreA or GreB allows the resumption of elongation from the new 3'terminus. GreA releases sequences of 2 to 3 nucleotides. This is Transcription elongation factor GreA from Christiangramia forsetii (strain DSM 17595 / CGMCC 1.15422 / KT0803) (Gramella forsetii).